Here is an 861-residue protein sequence, read N- to C-terminus: MQEQYRPDMIEPKVQQYWAENKVFKAIKDESKEKYYCLSMFPYPSGRLHMGHVRNYTIGDVISRYQRMLGKNVLQPFGWDAFGLPAEGAAIKNKTAPAKWTYENIAYMKKQLQLLGFGFDWDREIATCKPEYYKWEQWFFTELYKKGLVYKKTSTVNWCPNDETVLANEQVHEGCCWRCDTPVEQKEIPQWFIKITDYAEQLLGGLDTLPQWPDMVKTMQRNWIGRSEGVEITFDVANTNEKVAVYTTRPDTFYGVSYLGIAAAHPLASLAAQNNSELAAFIQEAKNAKVAEADLATMEKKGMATGLFAIHPLTGDKLPIWVANFVLMHYGTGAVMAVPAHDQRDFEFAQKYSLPIKQVIAPLADEEIDLTKQAFVEHGKLVNSDEFDGKNFDGAFNGIADKLEKLGVGKRQVNYRLRDWGVSRQRYWGAPIPMLTLENGDVVPAPMEDLPIILPEDVVMDGVKSPINADPNWAKTTFNDAPALKETDTFDTFMESSWYYARYTCPQYQNGMLDAEEANYWLPVDQYIGGIEHATMHLLYFRFFHKLLRDAGFVTSEEPADKLLCQGMVLADAFYYTSPTNERIWVSPTQVTLERDEKGRIIKATDPEGRELVHSGMTKMSKSKNNGIDPQEMVEKYGADTVRLFMMFASPAEMTLEWQESGVEGAKRFLGRVWNLVYQYQQNPAKTSLDLTALSAEQKVLRREVHKTIAKVSDDIGRRQTFNTAIAAVMELMNKLTKASLDSEQDRAVMAEALSAVVRMLYPITPHICFELWQALGNESAIDTAEWVKADEAAMVEDEKLIVVQVNGKVRGKVTVATDADEDTVKTIAFADENVKKFIDNQHIVKVIYVVGKLLNVVVKP.

Positions 42-52 (PYPSGRLHMGH) match the 'HIGH' region motif. The 'KMSKS' region signature appears at 619–623 (KMSKS). Residue K622 participates in ATP binding.

It belongs to the class-I aminoacyl-tRNA synthetase family.

It is found in the cytoplasm. The enzyme catalyses tRNA(Leu) + L-leucine + ATP = L-leucyl-tRNA(Leu) + AMP + diphosphate. The polypeptide is Leucine--tRNA ligase (Haemophilus influenzae (strain ATCC 51907 / DSM 11121 / KW20 / Rd)).